The sequence spans 729 residues: E3 ubiquitin-protein ligase Trim36 (729 aa).

The RING-type; degenerate zinc finger occupies 33–84; it reads CPACKELFTHPLILPCQHSVCHKCVKELLLSLDDSFNDVASDSSNQSSPRLR. 2 consecutive B box-type zinc fingers follow at residues 154-192 and 207-249; these read AIMC…WGTV and PKVL…VTTM. Zn(2+)-binding residues include C212, H215, C235, and H241. The stretch at 271–302 forms a coiled coil; that stretch reads ESQVKSQISELNLLMKETECNGERAKEEALAH. The region spanning 356-413 is the COS domain; the sequence is LKETDQSCFVQTAKQLHLRIQKATESLKSFRPAAQASFEDYVVNISKQTEVLGELSFF. The 96-residue stretch at 416-511 folds into the Fibronectin type-III domain; it reads GIDIPEINEE…RELILHTPPA (96 aa). The region spanning 509-723 is the B30.2/SPRY domain; it reads PPAPVFSFLF…LEEAITAKYL (215 aa). The segment at 606 to 626 is disordered; sequence RDAASPRYEQDSGHDSGSEDA. Residues 613-622 are compositionally biased toward basic and acidic residues; that stretch reads YEQDSGHDSG.

The protein belongs to the TRIM/RBCC family. As to quaternary structure, interacts with CENPH. As to expression, expressed in testis. Strongly expressed in the neural tube region in 14.5 dpc embryos.

It localises to the cytoplasm. Its subcellular location is the cytoplasmic vesicle. It is found in the secretory vesicle. The protein localises to the acrosome. The protein resides in the cytoskeleton. The catalysed reaction is S-ubiquitinyl-[E2 ubiquitin-conjugating enzyme]-L-cysteine + [acceptor protein]-L-lysine = [E2 ubiquitin-conjugating enzyme]-L-cysteine + N(6)-ubiquitinyl-[acceptor protein]-L-lysine.. Functionally, E3 ubiquitin-protein ligase which mediates ubiquitination and subsequent proteasomal degradation of target proteins. Involved in chromosome segregation and cell cycle regulation. May play a role in the acrosome reaction and fertilization. The polypeptide is E3 ubiquitin-protein ligase Trim36 (Trim36) (Mus musculus (Mouse)).